A 153-amino-acid chain; its full sequence is Fucose mutarotase (153 aa).

Histidine 24 acts as the Proton donor in catalysis. Aspartate 32 is a binding site for substrate. The active site involves aspartate 69. Residues methionine 79, tyrosine 119, tyrosine 137, and asparagine 139 each contribute to the substrate site. Residue tyrosine 119 is part of the active site.

It belongs to the RbsD / FucU family. As to quaternary structure, mainly homodimer, but also exists as homotetramer, homooctamer, and homodecamer. The homodimeric form seems catalytically inactive.

The enzyme catalyses alpha-L-fucose = beta-L-fucose. It functions in the pathway carbohydrate metabolism; L-fucose metabolism. Functionally, involved in the interconversion between alpha- and beta-L-fucoses. L-Fucose (6-deoxy-L-galactose) exists as alpha-L-fucose (29.5%) and beta-L-fucose (70.5%), the beta-form is metabolized through the salvage pathway. GDP-L-fucose formed either by the de novo or salvage pathways is transported into the endoplasmic reticulum, where it serves as a substrate for N- and O-glycosylations by fucosyltransferases. Fucosylated structures expressed on cell surfaces or secreted in biological fluids are believed to play a critical role in cell-cell adhesion and recognition processes. The chain is Fucose mutarotase (FUOM) from Bos taurus (Bovine).